The chain runs to 363 residues: NAD(P)H-quinone oxidoreductase subunit 1, chloroplastic (363 aa).

8 helical membrane passes run 30-50 (LVPIVTLVLGITIGVLVIVWL), 98-118 (FSIGPSIAVISIFLSYSVIPF), 127-147 (LSIGVFFWIAISSIAPVGLLM), 165-185 (AAQSISYEIPLALCVLSISLL), 203-223 (FWGWNLWRQPIGFIVFLISSL), 248-268 (YSGIKFGLFYIASYLNLLVSS), 300-320 (VFGTLIGIFITLAKTYLFLFI), and 336-356 (LLNLGWKFLLPISLGNLLLTT).

The protein belongs to the complex I subunit 1 family. As to quaternary structure, NDH is composed of at least 16 different subunits, 5 of which are encoded in the nucleus.

It is found in the plastid. It localises to the chloroplast thylakoid membrane. It carries out the reaction a plastoquinone + NADH + (n+1) H(+)(in) = a plastoquinol + NAD(+) + n H(+)(out). The catalysed reaction is a plastoquinone + NADPH + (n+1) H(+)(in) = a plastoquinol + NADP(+) + n H(+)(out). Functionally, NDH shuttles electrons from NAD(P)H:plastoquinone, via FMN and iron-sulfur (Fe-S) centers, to quinones in the photosynthetic chain and possibly in a chloroplast respiratory chain. The immediate electron acceptor for the enzyme in this species is believed to be plastoquinone. Couples the redox reaction to proton translocation, and thus conserves the redox energy in a proton gradient. The sequence is that of NAD(P)H-quinone oxidoreductase subunit 1, chloroplastic from Solanum lycopersicum (Tomato).